The following is a 116-amino-acid chain: Large ribosomal subunit protein bL19 (116 aa).

The protein belongs to the bacterial ribosomal protein bL19 family.

In terms of biological role, this protein is located at the 30S-50S ribosomal subunit interface and may play a role in the structure and function of the aminoacyl-tRNA binding site. This chain is Large ribosomal subunit protein bL19, found in Blochmanniella pennsylvanica (strain BPEN).